The following is a 60-amino-acid chain: Large ribosomal subunit protein bL32 (60 aa).

The protein belongs to the bacterial ribosomal protein bL32 family.

The polypeptide is Large ribosomal subunit protein bL32 (Borreliella afzelii (strain PKo) (Borrelia afzelii)).